The sequence spans 84 residues: Small ribosomal subunit protein bS16c (84 aa).

The protein belongs to the bacterial ribosomal protein bS16 family.

The protein localises to the plastid. The protein resides in the chloroplast. This Anthoceros angustus (Hornwort) protein is Small ribosomal subunit protein bS16c.